Consider the following 157-residue polypeptide: Ribosome maturation factor RimM (157 aa).

A PRC barrel domain is found at 89-156 (PGEYYHVDLI…DRLLIDPEFV (68 aa)).

It belongs to the RimM family. In terms of assembly, binds ribosomal protein uS19.

It localises to the cytoplasm. Its function is as follows. An accessory protein needed during the final step in the assembly of 30S ribosomal subunit, possibly for assembly of the head region. Essential for efficient processing of 16S rRNA. May be needed both before and after RbfA during the maturation of 16S rRNA. It has affinity for free ribosomal 30S subunits but not for 70S ribosomes. This is Ribosome maturation factor RimM from Rhizorhabdus wittichii (strain DSM 6014 / CCUG 31198 / JCM 15750 / NBRC 105917 / EY 4224 / RW1) (Sphingomonas wittichii).